The primary structure comprises 195 residues: Probable molybdenum cofactor guanylyltransferase (195 aa).

Residues 9-11 (LAG), Lys-21, Asp-69, and Asp-100 contribute to the GTP site. Asp-100 is a binding site for Mg(2+).

The protein belongs to the MobA family. It depends on Mg(2+) as a cofactor.

The protein resides in the cytoplasm. It catalyses the reaction Mo-molybdopterin + GTP + H(+) = Mo-molybdopterin guanine dinucleotide + diphosphate. Its function is as follows. Transfers a GMP moiety from GTP to Mo-molybdopterin (Mo-MPT) cofactor (Moco or molybdenum cofactor) to form Mo-molybdopterin guanine dinucleotide (Mo-MGD) cofactor. The polypeptide is Probable molybdenum cofactor guanylyltransferase (Geobacillus sp. (strain WCH70)).